Consider the following 247-residue polypeptide: 2,3-bisphosphoglycerate-dependent phosphoglycerate mutase (247 aa).

Residues 7 to 14 (RHGESEWN), 20 to 21 (TG), arginine 59, 86 to 89 (ERHY), lysine 97, 113 to 114 (RR), and 182 to 183 (GN) each bind substrate. Histidine 8 (tele-phosphohistidine intermediate) is an active-site residue. Glutamate 86 serves as the catalytic Proton donor/acceptor.

It belongs to the phosphoglycerate mutase family. BPG-dependent PGAM subfamily.

It carries out the reaction (2R)-2-phosphoglycerate = (2R)-3-phosphoglycerate. It functions in the pathway carbohydrate degradation; glycolysis; pyruvate from D-glyceraldehyde 3-phosphate: step 3/5. Its function is as follows. Catalyzes the interconversion of 2-phosphoglycerate and 3-phosphoglycerate. This is 2,3-bisphosphoglycerate-dependent phosphoglycerate mutase from Treponema denticola (strain ATCC 35405 / DSM 14222 / CIP 103919 / JCM 8153 / KCTC 15104).